Here is a 362-residue protein sequence, read N- to C-terminus: MAEQNCEIAWFSALCDDDYEFLGVPDKYLQSSWEHCRNIVLRAEEGGFDNILLPSGYQLGLDTTAFAAAVATQVRRIKLLWATRMGEDWPPQLARRIATLDRILGPNAEGTGGRLNVNIISSDMPGETIASGPRYARATEIMKIVRTLLNGEHLDFQGEFYKLKLDPPRIGTISGRCPAFYFGGLSHDARECAAEASDVYLMWPDTMDKVRETIADMKARAANYGRTLRFGYRVHVVVRETEDEARAYADRLLSKLDDEAGKAIREKSLDAKNFGVQRQQELRGAADGDGFVEENLWTGIGRARSGCGAAIVGTPDQVLAKLRAYQAEGIEAFILSGYPHAQEADMFARYVLPHINHGPLNI.

Belongs to the SsuD family.

The enzyme catalyses 6-sulfo-D-quinovose + FMNH2 + O2 = 6-dehydro-D-glucose + FMN + sulfite + H2O + 2 H(+). Functionally, part of the alkanesulfonate monooxygenase (sulfo-ASMO) pathway, a D-sulfoquinovose degradation pathway that enables the complete utilization of all carbons within sulfoquinovose (SQ) with concomitant production of inorganic sulfite. Catalyzes the oxidative desulfurization of sulfoquinovose to sulfite and 6-dehydro-D-glucose. The chain is Sulfoquinovose monooxygenase from Novosphingobium aromaticivorans (strain ATCC 700278 / DSM 12444 / CCUG 56034 / CIP 105152 / NBRC 16084 / F199).